Reading from the N-terminus, the 314-residue chain is Olfactory receptor 14K1 (314 aa).

Topologically, residues 1-23 are extracellular; it reads MTNQTQMMEFLLVRFTENWVLLR. Asn-3 is a glycosylation site (N-linked (GlcNAc...) asparagine). A helical membrane pass occupies residues 24-44; sequence LHALLFSLIYLTAVLMNLVII. Topologically, residues 45–52 are cytoplasmic; it reads LLMILDHR. A helical transmembrane segment spans residues 53–73; sequence LHMAMYFFLRHLSFLDLCLIS. Residues 74-97 lie on the Extracellular side of the membrane; it reads ATVPKSILNSVASTDSISFLGCVL. Cys-95 and Cys-187 form a disulfide bridge. The helical transmembrane segment at 98–118 threads the bilayer; that stretch reads QLFLVVLLAGSEIGILTAMSY. Residues 119-131 are Cytoplasmic-facing; sequence DRYAAICCPLHCE. The helical transmembrane segment at 132–152 threads the bilayer; that stretch reads AVMSRGLCVQLMALSWLNRGA. Residues 153–194 lie on the Extracellular side of the membrane; sequence LGLLYTAGTFSLNFYGSDELHQFFCDVPALLKLTCSKEHAII. A helical membrane pass occupies residues 195–215; sequence SVSVAIGVCYAFSCLVCIVVS. The Cytoplasmic segment spans residues 216–235; sequence YVYIFSAVLRISQRQRQSKA. The helical transmembrane segment at 236–256 threads the bilayer; it reads FSNCVPHLIVVTVFLVTGAVA. Topologically, residues 257-269 are extracellular; sequence YLKPGSDAPSILD. Residues 270–290 form a helical membrane-spanning segment; the sequence is LLVSVFYSVAPPTLNPVIYCL. The Cytoplasmic segment spans residues 291–314; sequence KNKDIKSALSKVLWNVRSSGVMKR.

Belongs to the G-protein coupled receptor 1 family.

The protein localises to the cell membrane. In terms of biological role, odorant receptor. The polypeptide is Olfactory receptor 14K1 (OR14K1) (Homo sapiens (Human)).